Here is a 359-residue protein sequence, read N- to C-terminus: Threonine dehydratase biosynthetic, chloroplastic (359 aa).

ACT-like domains follow at residues 184–256 (ALLA…NFSH) and 278–349 (IFGE…LDNS).

Belongs to the serine/threonine dehydratase family. Homotetramer. Pyridoxal 5'-phosphate serves as cofactor. As to expression, floral buds of untreated plants. After ABA treatment or mechanical wounding is mostly accumulated in leaves, to a lesser extent in stems, but not in roots. Expressed in anthers, carpel leaves, pith cells, sepals and petals. Not expressed in stomium, vascular bundles, epidermal cells or pollen mother cells.

It is found in the plastid. It localises to the chloroplast. It carries out the reaction L-threonine = 2-oxobutanoate + NH4(+). It functions in the pathway amino-acid biosynthesis; L-isoleucine biosynthesis; 2-oxobutanoate from L-threonine: step 1/1. The sequence is that of Threonine dehydratase biosynthetic, chloroplastic from Solanum tuberosum (Potato).